Here is a 332-residue protein sequence, read N- to C-terminus: MKVAVLGAGAWGTALAGHLAARHDTLLWARDAALIAGLQARHENSRYLDGIALPDALRYDADLGAALAHGAADDALCVIAAPVAGLRTLFGAMRDAGCVPAHVVWVCKGFEADTHLLPHQVIAAELPGQHSNGVLSGPSFAREVGLALPVALTVASTSAECRERTLAAFHHGAMRIYTGDDVVGVEVGGAVKNVLAIATGIADGLGLGLNARAALVTRGLAEMSRLGVALGGRAETFTGLTGLGDLILTATGDLSRNRTVGLQLAAGRSLNDILGALGHVAEGVRCAQAVLALARAQSIEMPITEAVCGVLFDGVAPRDAVSGLLRRDARAE.

Residues W11, R30, and K108 each coordinate NADPH. Sn-glycerol 3-phosphate contacts are provided by K108, G137, and S139. NADPH is bound at residue A141. Residues K192, D245, S255, R256, and N257 each contribute to the sn-glycerol 3-phosphate site. The active-site Proton acceptor is the K192. R256 contacts NADPH. Residues V280 and E282 each coordinate NADPH.

This sequence belongs to the NAD-dependent glycerol-3-phosphate dehydrogenase family.

It is found in the cytoplasm. The catalysed reaction is sn-glycerol 3-phosphate + NAD(+) = dihydroxyacetone phosphate + NADH + H(+). It carries out the reaction sn-glycerol 3-phosphate + NADP(+) = dihydroxyacetone phosphate + NADPH + H(+). The protein operates within membrane lipid metabolism; glycerophospholipid metabolism. In terms of biological role, catalyzes the reduction of the glycolytic intermediate dihydroxyacetone phosphate (DHAP) to sn-glycerol 3-phosphate (G3P), the key precursor for phospholipid synthesis. In Burkholderia ambifaria (strain MC40-6), this protein is Glycerol-3-phosphate dehydrogenase [NAD(P)+].